The chain runs to 348 residues: Beta-hexosaminidase (348 aa).

Residues aspartate 64, arginine 72, arginine 138, and 168–169 each bind substrate; that span reads KH. The active-site Proton donor/acceptor is histidine 181. Aspartate 252 acts as the Nucleophile in catalysis.

This sequence belongs to the glycosyl hydrolase 3 family. NagZ subfamily.

The protein resides in the cytoplasm. It catalyses the reaction Hydrolysis of terminal non-reducing N-acetyl-D-hexosamine residues in N-acetyl-beta-D-hexosaminides.. It participates in cell wall biogenesis; peptidoglycan recycling. Functionally, plays a role in peptidoglycan recycling by cleaving the terminal beta-1,4-linked N-acetylglucosamine (GlcNAc) from peptide-linked peptidoglycan fragments, giving rise to free GlcNAc, anhydro-N-acetylmuramic acid and anhydro-N-acetylmuramic acid-linked peptides. The protein is Beta-hexosaminidase of Alkalilimnicola ehrlichii (strain ATCC BAA-1101 / DSM 17681 / MLHE-1).